A 1375-amino-acid polypeptide reads, in one-letter code: Probable GMP synthase [glutamine-hydrolyzing] (1375 aa).

The 113-residue stretch at 7–119 folds into the Glutamine amidotransferase type-1; first part domain; it reads QILVLDFGSQ…VLEIMESSQD (113 aa). Cys-84 functions as the Nucleophile in the catalytic mechanism. The insert-1 stretch occupies residues 120 to 500; the sequence is SKDSSCFAFQ…NNATQGFKSC (381 aa). N-acetyltransferase domains follow at residues 141–300 and 318–484; these read LSFD…KALE and VFLR…LEKK. A Glutamine amidotransferase type-1; second part domain is found at 501–580; sequence SLFKGIKQDS…AVGICGANTC (80 aa). Active-site residues include His-554 and Glu-556. The tract at residues 597 to 1071 is insert-2; the sequence is IVYGGKAHCE…SGVANSLKIT (475 aa). An N-acetyltransferase 3 domain is found at 612-765; sequence MQIQEAFKHI…ELIPLSIARE (154 aa). The tract at residues 1011 to 1036 is disordered; sequence RIVDSQHTESSDIKGQSHLESSADSG. Positions 1014-1027 are enriched in basic and acidic residues; sequence DSQHTESSDIKGQS. The 196-residue stretch at 1055–1250 folds into the GMPS ATP-PPase domain; it reads YLEGNDRSGV…LGMPESMLMR (196 aa). 1083 to 1089 is a binding site for ATP; sequence SGGVDSS.

As to quaternary structure, homodimer.

It catalyses the reaction XMP + L-glutamine + ATP + H2O = GMP + L-glutamate + AMP + diphosphate + 2 H(+). It functions in the pathway purine metabolism; GMP biosynthesis; GMP from XMP (L-Gln route): step 1/1. In terms of biological role, catalyzes the synthesis of GMP from XMP. This is Probable GMP synthase [glutamine-hydrolyzing] (guaA) from Helicobacter hepaticus (strain ATCC 51449 / 3B1).